The primary structure comprises 203 residues: Endo-type membrane-bound lytic murein transglycosylase A (203 aa).

An N-terminal signal peptide occupies residues 1 to 15 (MKLRWFAFLIVLLAG). Residue Cys16 is the site of N-palmitoyl cysteine attachment. Cys16 carries the S-diacylglycerol cysteine lipid modification.

Belongs to the transglycosylase Slt family.

Its subcellular location is the cell outer membrane. The catalysed reaction is Endolytic cleavage of the (1-&gt;4)-beta-glycosidic linkage between N-acetylmuramic acid (MurNAc) and N-acetylglucosamine (GlcNAc) residues in peptidoglycan with concomitant formation of a 1,6-anhydrobond in the MurNAc residue.. Murein-degrading enzyme. May play a role in recycling of muropeptides during cell elongation and/or cell division. Preferentially cleaves at a distance of more than two disaccharide units from the ends of the glycan chain. This chain is Endo-type membrane-bound lytic murein transglycosylase A, found in Shigella dysenteriae serotype 1 (strain Sd197).